Reading from the N-terminus, the 227-residue chain is 2-C-methyl-D-erythritol 4-phosphate cytidylyltransferase (227 aa).

The protein belongs to the IspD/TarI cytidylyltransferase family. IspD subfamily.

The enzyme catalyses 2-C-methyl-D-erythritol 4-phosphate + CTP + H(+) = 4-CDP-2-C-methyl-D-erythritol + diphosphate. Its pathway is isoprenoid biosynthesis; isopentenyl diphosphate biosynthesis via DXP pathway; isopentenyl diphosphate from 1-deoxy-D-xylulose 5-phosphate: step 2/6. Functionally, catalyzes the formation of 4-diphosphocytidyl-2-C-methyl-D-erythritol from CTP and 2-C-methyl-D-erythritol 4-phosphate (MEP). In Thermosipho melanesiensis (strain DSM 12029 / CIP 104789 / BI429), this protein is 2-C-methyl-D-erythritol 4-phosphate cytidylyltransferase.